We begin with the raw amino-acid sequence, 257 residues long: MINPVAIRLGPFSIRWYAICIVSGMLLAVYLAMKEAPRKNIKSDDILDFILMAFPLSIVGARIYYVIFEWAYYSKHPVEIIAIWNGGIAIYGGLITGAILLVIFSYRRLINPIDFLDIAAPGVMIAQAIGRWGNFINQEAYGRAVKNLNYVPNFIKNQMYIDGAYRVPTFLYESLWNFLGFVIIMSIRHRPRTLKQGEVACFYLVWYGCGRFIIEGMRTDSLYLAGLRVSQWLSVILVIIGIVMIIYRRREQHISYY.

Transmembrane regions (helical) follow at residues 12 to 32 (FSIR…VYLA), 49 to 69 (FILM…VIFE), 83 to 103 (IWNG…LLVI), and 109 to 129 (LINP…AQAI). Residue R131 coordinates a 1,2-diacyl-sn-glycero-3-phospho-(1'-sn-glycerol). 3 consecutive transmembrane segments (helical) span residues 167–187 (VPTF…IMSI), 197–217 (GEVA…IEGM), and 226–246 (GLRV…VMII).

It belongs to the Lgt family.

The protein localises to the cell membrane. It carries out the reaction L-cysteinyl-[prolipoprotein] + a 1,2-diacyl-sn-glycero-3-phospho-(1'-sn-glycerol) = an S-1,2-diacyl-sn-glyceryl-L-cysteinyl-[prolipoprotein] + sn-glycerol 1-phosphate + H(+). It participates in protein modification; lipoprotein biosynthesis (diacylglyceryl transfer). Catalyzes the transfer of the diacylglyceryl group from phosphatidylglycerol to the sulfhydryl group of the N-terminal cysteine of a prolipoprotein, the first step in the formation of mature lipoproteins. The chain is Phosphatidylglycerol--prolipoprotein diacylglyceryl transferase from Streptococcus agalactiae serotype Ia (strain ATCC 27591 / A909 / CDC SS700).